We begin with the raw amino-acid sequence, 239 residues long: Protein Thf1 (239 aa).

Residues 183–219 adopt a coiled-coil conformation; sequence ERVKKDLELYRSNLDRLKQARAIVEEMVKAARRQQER. Positions 211–221 are enriched in basic and acidic residues; sequence KAARRQQERRQ. Residues 211–239 form a disordered region; the sequence is KAARRQQERRQSTASLPETPAADRRESSG.

The protein belongs to the THF1 family.

In terms of biological role, may be involved in photosynthetic membrane biogenesis. This is Protein Thf1 from Synechococcus sp. (strain JA-3-3Ab) (Cyanobacteria bacterium Yellowstone A-Prime).